We begin with the raw amino-acid sequence, 363 residues long: B3 domain-containing transcription factor LEC2 (363 aa).

A disordered region spans residues 1-27 (MDNFLPFPSSNANSVQELSMDPNNNRS). The segment covering 8-27 (PSSNANSVQELSMDPNNNRS) has biased composition (polar residues). A DNA-binding region (TF-B3) is located at residues 171 to 272 (CEKELKNSDV…NLYFAMNGNS (102 aa)). The segment at 331–351 (QHHQATSSSMPPEDHAYVGSS) is disordered.

The protein resides in the nucleus. In terms of biological role, transcription regulator that plays a central role in embryo development. Required for the maintenance of suspensor morphology, specification of cotyledon identity, progression through the maturation phase and suppression of premature germination. Ectopic expression is sufficient to promote somatic embryogenesis. The polypeptide is B3 domain-containing transcription factor LEC2 (LEC2) (Arabidopsis thaliana (Mouse-ear cress)).